Here is a 205-residue protein sequence, read N- to C-terminus: Imidazole glycerol phosphate synthase subunit HisH (205 aa).

One can recognise a Glutamine amidotransferase type-1 domain in the interval 1 to 205 (MIALVDYGGG…FFKMALGDKK (205 aa)). Cys-79 functions as the Nucleophile in the catalytic mechanism. Residues His-181 and Glu-183 contribute to the active site.

Heterodimer of HisH and HisF.

The protein resides in the cytoplasm. It carries out the reaction 5-[(5-phospho-1-deoxy-D-ribulos-1-ylimino)methylamino]-1-(5-phospho-beta-D-ribosyl)imidazole-4-carboxamide + L-glutamine = D-erythro-1-(imidazol-4-yl)glycerol 3-phosphate + 5-amino-1-(5-phospho-beta-D-ribosyl)imidazole-4-carboxamide + L-glutamate + H(+). The catalysed reaction is L-glutamine + H2O = L-glutamate + NH4(+). Its pathway is amino-acid biosynthesis; L-histidine biosynthesis; L-histidine from 5-phospho-alpha-D-ribose 1-diphosphate: step 5/9. Its function is as follows. IGPS catalyzes the conversion of PRFAR and glutamine to IGP, AICAR and glutamate. The HisH subunit catalyzes the hydrolysis of glutamine to glutamate and ammonia as part of the synthesis of IGP and AICAR. The resulting ammonia molecule is channeled to the active site of HisF. This Dehalococcoides mccartyi (strain ATCC BAA-2266 / KCTC 15142 / 195) (Dehalococcoides ethenogenes (strain 195)) protein is Imidazole glycerol phosphate synthase subunit HisH.